A 183-amino-acid polypeptide reads, in one-letter code: Abscisic acid receptor PYL10 (183 aa).

Residues 20-172 (HELVESQCSS…NLNSLADVTE (153 aa)) are START-like. A disulfide bond links cysteine 27 and cysteine 153. Abscisate is bound by residues lysine 56, 85 to 90 (ATKSTE), 112 to 118 (RLKNYSS), and glutamate 137. The short motif at 81 to 85 (SGLPA) is the Gate loop element. The Latch loop motif lies at 111–113 (HRL).

This sequence belongs to the PYR/PYL/RCAR abscisic acid intracellular receptor family. In terms of assembly, monomer. Forms heterodimer with PYL13, thus antagonizing PP2Cs-binding and ABA-independent inhibition of PP2Cs. Homodimer. Binds ABA on one subunit only. Binds to CARs protein in an ABA-independent manner, both at the plasma membrane and in the nucleus. Interacts with ABI1 and HAB1, and possibly with other PP2Cs, in an ABA-independent manner.

It localises to the cytoplasm. The protein localises to the nucleus. The protein resides in the cell membrane. Its function is as follows. Receptor for abscisic acid (ABA) required for ABA-mediated responses such as stomatal closure and germination inhibition. Inhibits the activity of group-A protein phosphatases type 2C (PP2Cs) in an ABA-independent manner but more efficiently when activated by ABA. Can be activated by both (-)-ABA and (+)-ABA. The polypeptide is Abscisic acid receptor PYL10 (PYL10) (Arabidopsis thaliana (Mouse-ear cress)).